The following is a 217-amino-acid chain: Small ribosomal subunit protein uS3 (217 aa).

The 69-residue stretch at 38–106 (IRKFVQKELA…QVHINIIEIK (69 aa)) folds into the KH type-2 domain.

Belongs to the universal ribosomal protein uS3 family. As to quaternary structure, part of the 30S ribosomal subunit. Forms a tight complex with proteins S10 and S14.

Binds the lower part of the 30S subunit head. Binds mRNA in the 70S ribosome, positioning it for translation. The polypeptide is Small ribosomal subunit protein uS3 (Streptococcus gordonii (strain Challis / ATCC 35105 / BCRC 15272 / CH1 / DL1 / V288)).